Consider the following 291-residue polypeptide: Translocon-associated protein subunit alpha (291 aa).

A signal peptide spans 1 to 20 (MRLLPRLLLLLLLVFPATVL). Residues 21–207 (FRGGPRGSLA…EREDGLDGET (187 aa)) are Lumenal-facing. Positions 34 to 83 (DLTEDEETVEDSIIEDEDDEAEVEEDEPTDLVEDKEEEDVSGEPEASPSA) are disordered. Residues 35-75 (LTEDEETVEDSIIEDEDDEAEVEEDEPTDLVEDKEEEDVSG) are compositionally biased toward acidic residues. N-linked (GlcNAc...) asparagine glycans are attached at residues Asn-136 and Asn-191. The helical transmembrane segment at 208 to 228 (IFMYMFLAGLGLLVIVGLHQL) threads the bilayer. Residues 229-291 (LESRKRKRPV…AQKRSVGSDE (63 aa)) are Cytoplasmic-facing. Ser-247 is subject to Phosphoserine. Thr-260 is modified (phosphothreonine). Positions 263 to 291 (QIMQSRRDKASPRRLPRKRAQKRSVGSDE) are disordered. A Phosphoserine modification is found at Ser-273. Residues 274-284 (PRRLPRKRAQK) show a composition bias toward basic residues.

Belongs to the TRAP-alpha family. As to quaternary structure, heterotetramer of TRAP-alpha, TRAP-beta, TRAP-delta and TRAP-gamma. Interacts with palmitoylated calnexin (CALX), the interaction is required for efficient folding of glycosylated proteins. Phosphorylated in its cytoplasmic tail.

Its subcellular location is the endoplasmic reticulum membrane. Functionally, TRAP proteins are part of a complex whose function is to bind calcium to the ER membrane and thereby regulate the retention of ER resident proteins. May be involved in the recycling of the translocation apparatus after completion of the translocation process or may function as a membrane-bound chaperone facilitating folding of translocated proteins. This chain is Translocon-associated protein subunit alpha (SSR1), found in Pongo abelii (Sumatran orangutan).